The chain runs to 183 residues: 16 kDa gamma-zein (183 aa).

The N-terminal stretch at 1 to 19 (MKVLIVALALLALAASAAS) is a signal peptide.

Interacts with OP10 (via N-terminus).

It localises to the vacuole. It is found in the aleurone grain. Zeins are major seed storage proteins. This Zea mays (Maize) protein is 16 kDa gamma-zein.